Consider the following 197-residue polypeptide: MSDDLNDFFAKKDSTKKVVKKPTSTTPKVVVKPVSPTTPVVSPTTVTSPVSPTTPVVEPKKVVDLSQLNKSKDTTPVVDVKESKTEQINIPTMRWADKNEQTTTTTQTKVYKNYPSLKKEETKVDEDDDQIYEDKEEEKEVKKDEENSTADEEPVKKSNKKVAPKQKKKSKQELEAEALMASLGIIDEKPVPKQKKK.

2 disordered regions span residues 1–30 (MSDD…PKVV) and 115–174 (PSLK…KQEL). A compositionally biased stretch (low complexity) spans 21–30 (KPTSTTPKVV). A compositionally biased stretch (acidic residues) spans 123–137 (KVDEDDDQIYEDKEE). A compositionally biased stretch (basic residues) spans 157–170 (KSNKKVAPKQKKKS).

This is an uncharacterized protein from Dictyostelium discoideum (Social amoeba).